A 208-amino-acid polypeptide reads, in one-letter code: Urease accessory protein UreE (208 aa).

The segment at 145–195 (AEAHGHGQAHAHDHHDHDHHDHGHDHAHHDHAHHDHAHDHHGHDHAHDHAH) is disordered.

The protein belongs to the UreE family.

The protein localises to the cytoplasm. In terms of biological role, involved in urease metallocenter assembly. Binds nickel. Probably functions as a nickel donor during metallocenter assembly. This Azorhizobium caulinodans (strain ATCC 43989 / DSM 5975 / JCM 20966 / LMG 6465 / NBRC 14845 / NCIMB 13405 / ORS 571) protein is Urease accessory protein UreE.